The chain runs to 256 residues: Glutamate racemase (256 aa).

Substrate contacts are provided by residues 11-12 (DS) and 43-44 (YG). The active-site Proton donor/acceptor is the Cys74. A substrate-binding site is contributed by 75-76 (NT). The active-site Proton donor/acceptor is the Cys182. 183-184 (TH) contacts substrate.

The protein belongs to the aspartate/glutamate racemases family.

The catalysed reaction is L-glutamate = D-glutamate. It functions in the pathway cell wall biogenesis; peptidoglycan biosynthesis. Its function is as follows. Provides the (R)-glutamate required for cell wall biosynthesis. The protein is Glutamate racemase of Leptospira interrogans serogroup Icterohaemorrhagiae serovar Lai (strain 56601).